A 340-amino-acid polypeptide reads, in one-letter code: Protein phosphatase PTC7 homolog fig (340 aa).

In terms of domain architecture, PPM-type phosphatase spans 58–314 (RAQAETIQAP…DDITVVLASV (257 aa)). 3 residues coordinate Mn(2+): Asp-90, Gly-91, and Asp-236.

This sequence belongs to the PP2C family. Mg(2+) serves as cofactor. It depends on Mn(2+) as a cofactor.

It carries out the reaction O-phospho-L-seryl-[protein] + H2O = L-seryl-[protein] + phosphate. The catalysed reaction is O-phospho-L-threonyl-[protein] + H2O = L-threonyl-[protein] + phosphate. This Drosophila pseudoobscura pseudoobscura (Fruit fly) protein is Protein phosphatase PTC7 homolog fig.